The chain runs to 227 residues: Cytochrome c oxidase subunit 2 (227 aa).

Residues 1 to 14 lie on the Mitochondrial intermembrane side of the membrane; sequence MAYPFELGFQDATS. A helical transmembrane segment spans residues 15-45; it reads PIMEELLHFHDHTLMIVFLISSLVLYIISLM. At 46 to 59 the chain is on the mitochondrial matrix side; the sequence is LTTKLTHTSTMDAQ. A helical membrane pass occupies residues 60–87; the sequence is EVETIWTILPAIILILIALPSLRILYMM. Over 88–227 the chain is Mitochondrial intermembrane; sequence DEINDPSLTV…HFENWSSSML (140 aa). Residues H161, C196, E198, C200, H204, and M207 each contribute to the Cu cation site. Residue E198 coordinates Mg(2+).

This sequence belongs to the cytochrome c oxidase subunit 2 family. In terms of assembly, component of the cytochrome c oxidase (complex IV, CIV), a multisubunit enzyme composed of 14 subunits. The complex is composed of a catalytic core of 3 subunits MT-CO1, MT-CO2 and MT-CO3, encoded in the mitochondrial DNA, and 11 supernumerary subunits COX4I, COX5A, COX5B, COX6A, COX6B, COX6C, COX7A, COX7B, COX7C, COX8 and NDUFA4, which are encoded in the nuclear genome. The complex exists as a monomer or a dimer and forms supercomplexes (SCs) in the inner mitochondrial membrane with NADH-ubiquinone oxidoreductase (complex I, CI) and ubiquinol-cytochrome c oxidoreductase (cytochrome b-c1 complex, complex III, CIII), resulting in different assemblies (supercomplex SCI(1)III(2)IV(1) and megacomplex MCI(2)III(2)IV(2)). Found in a complex with TMEM177, COA6, COX18, COX20, SCO1 and SCO2. Interacts with TMEM177 in a COX20-dependent manner. Interacts with COX20. Interacts with COX16. Cu cation is required as a cofactor.

The protein resides in the mitochondrion inner membrane. The enzyme catalyses 4 Fe(II)-[cytochrome c] + O2 + 8 H(+)(in) = 4 Fe(III)-[cytochrome c] + 2 H2O + 4 H(+)(out). Functionally, component of the cytochrome c oxidase, the last enzyme in the mitochondrial electron transport chain which drives oxidative phosphorylation. The respiratory chain contains 3 multisubunit complexes succinate dehydrogenase (complex II, CII), ubiquinol-cytochrome c oxidoreductase (cytochrome b-c1 complex, complex III, CIII) and cytochrome c oxidase (complex IV, CIV), that cooperate to transfer electrons derived from NADH and succinate to molecular oxygen, creating an electrochemical gradient over the inner membrane that drives transmembrane transport and the ATP synthase. Cytochrome c oxidase is the component of the respiratory chain that catalyzes the reduction of oxygen to water. Electrons originating from reduced cytochrome c in the intermembrane space (IMS) are transferred via the dinuclear copper A center (CU(A)) of subunit 2 and heme A of subunit 1 to the active site in subunit 1, a binuclear center (BNC) formed by heme A3 and copper B (CU(B)). The BNC reduces molecular oxygen to 2 water molecules using 4 electrons from cytochrome c in the IMS and 4 protons from the mitochondrial matrix. This is Cytochrome c oxidase subunit 2 (MT-CO2) from Tamias merriami (Merriam's chipmunk).